The primary structure comprises 319 residues: Pantothenate kinase (319 aa).

Residue 97–104 (GSVAVGKS) participates in ATP binding.

The protein belongs to the prokaryotic pantothenate kinase family.

The protein localises to the cytoplasm. It catalyses the reaction (R)-pantothenate + ATP = (R)-4'-phosphopantothenate + ADP + H(+). It functions in the pathway cofactor biosynthesis; coenzyme A biosynthesis; CoA from (R)-pantothenate: step 1/5. In Chelativorans sp. (strain BNC1), this protein is Pantothenate kinase.